The following is a 726-amino-acid chain: Quinolinate synthase, chloroplastic (726 aa).

Residues 1–67 (MDAANLVMKS…KKPSNNSTFT (67 aa)) constitute a chloroplast transit peptide. Cys133 functions as the Cysteine persulfide intermediate in the catalytic mechanism. Iminosuccinate-binding residues include His283 and Ser309. Cys363 provides a ligand contact to [4Fe-4S] cluster. Iminosuccinate is bound by residues 392–394 (YIN) and Ser414. Position 487 (Cys487) interacts with [4Fe-4S] cluster. Iminosuccinate contacts are provided by residues 513–515 (HFE) and Thr538. Cys643 serves as a coordination point for [4Fe-4S] cluster.

It belongs to the quinolinate synthase family. Type 1 subfamily. Homodimer. It depends on [4Fe-4S] cluster as a cofactor.

Its subcellular location is the plastid. The protein localises to the chloroplast. The enzyme catalyses iminosuccinate + dihydroxyacetone phosphate = quinolinate + phosphate + 2 H2O + H(+). It participates in alkaloid biosynthesis; nicotine biosynthesis. Its pathway is cofactor biosynthesis; NAD(+) biosynthesis; quinolinate from iminoaspartate: step 1/1. Involved in the biosynthesis of pyridine alkaloid natural products, leading mainly to the production of anabasine, anatabine, nicotine and nornicotine, effective deterrents against herbivores with antiparasitic and pesticide properties (neurotoxins); nornicotine serves as the precursor in the synthesis of the carcinogen compound N'-nitrosonornicotine (NNN). Catalyzes the condensation of iminoaspartate with dihydroxyacetone phosphate to form quinolinate. This Nicotiana tabacum (Common tobacco) protein is Quinolinate synthase, chloroplastic.